The following is a 242-amino-acid chain: Small ribosomal subunit protein uS2 (242 aa).

It belongs to the universal ribosomal protein uS2 family.

The protein is Small ribosomal subunit protein uS2 of Shewanella loihica (strain ATCC BAA-1088 / PV-4).